The sequence spans 211 residues: Rho-related GTP-binding protein RhoF (211 aa).

Met1 is modified (N-acetylmethionine). Residue 26-33 participates in GTP binding; sequence GDGGCGKT. The short motif at 48 to 56 is the Effector region element; sequence YAPSVFEKY. Residues 73–77 and 131–134 contribute to the GTP site; these read DTAGQ and CKTD. Cys208 carries the post-translational modification Cysteine methyl ester. The S-geranylgeranyl cysteine moiety is linked to residue Cys208. Residues 209-211 constitute a propeptide, removed in mature form; it reads LLL.

Belongs to the small GTPase superfamily. Rho family.

The protein resides in the cell membrane. The protein localises to the cytoplasm. It localises to the cytoskeleton. Functionally, plasma membrane-associated small GTPase which cycles between an active GTP-bound and an inactive GDP-bound state. Causes the formation of thin, actin-rich surface projections called filopodia. Functions cooperatively with CDC42 and Rac to generate additional structures, increasing the diversity of actin-based morphology. The sequence is that of Rho-related GTP-binding protein RhoF (RHOF) from Homo sapiens (Human).